The chain runs to 314 residues: Malate dehydrogenase (314 aa).

NAD(+) contacts are provided by residues 7–12 and Asp-32; that span reads GAGNVG. Substrate-binding residues include Arg-81 and Arg-87. NAD(+)-binding positions include Asn-94 and 117–119; that span reads VAN. Residues Asn-119 and Arg-150 each coordinate substrate. His-174 acts as the Proton acceptor in catalysis.

This sequence belongs to the LDH/MDH superfamily. MDH type 3 family.

The catalysed reaction is (S)-malate + NAD(+) = oxaloacetate + NADH + H(+). Catalyzes the reversible oxidation of malate to oxaloacetate. This chain is Malate dehydrogenase, found in Salinibacter ruber (strain DSM 13855 / M31).